Here is a 698-residue protein sequence, read N- to C-terminus: Elongation factor G 2 (698 aa).

In terms of domain architecture, tr-type G spans 8–290 (ERYRNIGIMA…AVVDYLPSPV (283 aa)). GTP contacts are provided by residues 17–24 (AHIDAGKT), 88–92 (DTPGH), and 142–145 (NKMD).

This sequence belongs to the TRAFAC class translation factor GTPase superfamily. Classic translation factor GTPase family. EF-G/EF-2 subfamily.

The protein resides in the cytoplasm. Catalyzes the GTP-dependent ribosomal translocation step during translation elongation. During this step, the ribosome changes from the pre-translocational (PRE) to the post-translocational (POST) state as the newly formed A-site-bound peptidyl-tRNA and P-site-bound deacylated tRNA move to the P and E sites, respectively. Catalyzes the coordinated movement of the two tRNA molecules, the mRNA and conformational changes in the ribosome. In Methylococcus capsulatus (strain ATCC 33009 / NCIMB 11132 / Bath), this protein is Elongation factor G 2.